A 325-amino-acid chain; its full sequence is Elongation factor P--(R)-beta-lysine ligase (325 aa).

76–78 (SPE) serves as a coordination point for substrate. Residues 100 to 102 (RNE) and asparagine 109 each bind ATP. Tyrosine 118 lines the substrate pocket. 244-245 (EL) is a binding site for ATP. Residue glutamate 251 participates in substrate binding. Glycine 300 is a binding site for ATP.

The protein belongs to the class-II aminoacyl-tRNA synthetase family. EpmA subfamily. Homodimer.

It carries out the reaction D-beta-lysine + L-lysyl-[protein] + ATP = N(6)-((3R)-3,6-diaminohexanoyl)-L-lysyl-[protein] + AMP + diphosphate + H(+). Functionally, with EpmB is involved in the beta-lysylation step of the post-translational modification of translation elongation factor P (EF-P). Catalyzes the ATP-dependent activation of (R)-beta-lysine produced by EpmB, forming a lysyl-adenylate, from which the beta-lysyl moiety is then transferred to the epsilon-amino group of a conserved specific lysine residue in EF-P. The protein is Elongation factor P--(R)-beta-lysine ligase of Hamiltonella defensa subsp. Acyrthosiphon pisum (strain 5AT).